Consider the following 469-residue polypeptide: Tubulin gamma-1 chain (469 aa).

142 to 148 (AGGTGSG) is a GTP binding site.

This sequence belongs to the tubulin family.

Its subcellular location is the cytoplasm. It localises to the cytoskeleton. The protein localises to the microtubule organizing center. Functionally, tubulin is the major constituent of microtubules. The gamma chain is found at microtubule organizing centers (MTOC) such as the spindle poles, suggesting that it is involved in the minus-end nucleation of microtubule assembly. The sequence is that of Tubulin gamma-1 chain (TUBG1) from Zea mays (Maize).